A 102-amino-acid polypeptide reads, in one-letter code: uncharacterized protein (102 aa).

Residues 1–13 (PSSSQALSVPSLS) are compositionally biased toward low complexity. Positions 1–24 (PSSSQALSVPSLSSEKKTASPTCV) are disordered.

This is an uncharacterized protein from Human cytomegalovirus (strain AD169) (HHV-5).